The following is a 474-amino-acid chain: PRAME family member 17 (474 aa).

An LRR 1; degenerate repeat occupies 97–124 (RWKLQVLDLRDVDGNFWTIWSGARALSC). Residues 179 to 203 (HLCCNKVQNYSMPTSSFRNLLKRVY) form an LRR 2; degenerate repeat. The stretch at 204-230 (PDSIQELEIKRKCSLNKTGKFAPYLSQ) is one LRR 3; degenerate repeat. The stretch at 231 to 265 (MSNLRKLFLAFGYDDELYVSGQQQFVPDLDCPFLC) is one LRR 4; degenerate repeat. 5 LRR repeats span residues 266–291 (LYYP…LRCL), 292–323 (KNPL…SQLK), 324–342 (ELHL…PLGA), 348–375 (AATL…ALSR), and 376–400 (CSQL…LLCH).

This sequence belongs to the PRAME family.

This is PRAME family member 17 from Homo sapiens (Human).